Here is a 348-residue protein sequence, read N- to C-terminus: NADH-cytochrome b5 reductase 2 (348 aa).

The helical transmembrane segment at 41-61 threads the bilayer; that stretch reads TLLYGAAAAAVAGAGYYFLGG. An FAD-binding FR-type domain is found at 97–202; that stretch reads QGWVSLKLEE…KGPLPKYPWT (106 aa). Residue 205-240 participates in FAD binding; sequence KHGHIALVAGGTGITPMFQLCRAIFNNPDDQTKVTL.

This sequence belongs to the flavoprotein pyridine nucleotide cytochrome reductase family. The cofactor is FAD.

It is found in the mitochondrion outer membrane. The enzyme catalyses 2 Fe(III)-[cytochrome b5] + NADH = 2 Fe(II)-[cytochrome b5] + NAD(+) + H(+). Functionally, may mediate the reduction of outer membrane cytochrome b5. This Chaetomium globosum (strain ATCC 6205 / CBS 148.51 / DSM 1962 / NBRC 6347 / NRRL 1970) (Soil fungus) protein is NADH-cytochrome b5 reductase 2 (MCR1).